We begin with the raw amino-acid sequence, 440 residues long: C4-dicarboxylate TRAP transporter large permease protein DctM (440 aa).

13 helical membrane passes run 4–24 (LIIF…SISL), 54–74 (FEIM…HGGV), 89–109 (WHGG…AVSG), 112–132 (PATV…QGFP), 148–168 (ILIP…GMVV), 181–201 (VGEL…FLAF), 230–250 (AAWG…GIFT), 255–275 (AAMS…DLTL), 291–311 (MLLY…HEGI), 318–338 (WMVN…ILLL), 349–369 (IVLI…IDPV), 370–390 (HFGI…PVGL), and 410–430 (VWPW…VPAI).

Belongs to the TRAP transporter large permease family. As to quaternary structure, the complex comprises the extracytoplasmic solute receptor protein DctP, and the two transmembrane proteins DctQ and DctM.

Its subcellular location is the cell inner membrane. Functionally, part of the tripartite ATP-independent periplasmic (TRAP) transport system DctPQM involved in C4-dicarboxylates uptake. The polypeptide is C4-dicarboxylate TRAP transporter large permease protein DctM (Rhodobacter capsulatus (Rhodopseudomonas capsulata)).